Consider the following 348-residue polypeptide: MSTIEEQLKALREETLASLKQITAGNEKEMQDLRVSVLGKKGSLTEILKGMKDVSAEMRPIIGKHVNEARDVLTAAFEETAKLLEEKKVAAQLASESIDVTLPGRPVATGHRHVLTQTSEEIEDIFIGMGYQVVDGFEVEQDYYNFERMNLPKDHPARDMQDTFYITEEILLRTHTSPVQARAMDAHDFSKGPLKMISPGRVFRRDTDDATHSHQFHQIEGLVVGKNISMADLQGTLQLIVQKMFGEERQIRLRPSYFPFTEPSVEVDVSCFKCGGEGCNVCKKTGWIEIMGAGMVHPRVLEMSGIDATVYSGFAFGLGQERVAMLRYGINDIRGFYQGDVRFSEQFK.

Mg(2+) is bound at residue E262.

Belongs to the class-II aminoacyl-tRNA synthetase family. Phe-tRNA synthetase alpha subunit type 1 subfamily. In terms of assembly, tetramer of two alpha and two beta subunits. The cofactor is Mg(2+).

Its subcellular location is the cytoplasm. It catalyses the reaction tRNA(Phe) + L-phenylalanine + ATP = L-phenylalanyl-tRNA(Phe) + AMP + diphosphate + H(+). The sequence is that of Phenylalanine--tRNA ligase alpha subunit from Streptococcus pneumoniae (strain 70585).